Consider the following 291-residue polypeptide: GTPase Era (291 aa).

Residues 2–167 (KSGFVSIIGR…LDEIVKCLNE (166 aa)) form the Era-type G domain. Residues 10–17 (GRTNAGKS) are G1. 10 to 17 (GRTNAGKS) is a binding site for GTP. Positions 36–40 (NATRR) are G2. The interval 57–60 (DTPG) is G3. Residues 57–61 (DTPGL) and 116–119 (NKVD) each bind GTP. Residues 116-119 (NKVD) form a G4 region. Residues 146 to 148 (YSS) are G5. Residues 186-274 (YRDFILESIY…LLKLFVTVKK (89 aa)) form the KH type-2 domain.

It belongs to the TRAFAC class TrmE-Era-EngA-EngB-Septin-like GTPase superfamily. Era GTPase family. Monomer.

Its subcellular location is the cytoplasm. The protein resides in the cell inner membrane. Functionally, an essential GTPase that binds both GDP and GTP, with rapid nucleotide exchange. Plays a role in 16S rRNA processing and 30S ribosomal subunit biogenesis and possibly also in cell cycle regulation and energy metabolism. This Campylobacter jejuni subsp. doylei (strain ATCC BAA-1458 / RM4099 / 269.97) protein is GTPase Era.